Here is an 86-residue protein sequence, read N- to C-terminus: MKNLIAELLFKLAQKEEESKELCAQVEALEIIVTAMLRNMAQNDQQRLIDQVEGALYEVKPDASIPDDDTELLRDYVKKLLKHPRQ.

Residues 1–36 (MKNLIAELLFKLAQKEEESKELCAQVEALEIIVTAM) adopt a coiled-coil conformation.

It belongs to the IraP family. In terms of assembly, interacts with RssB.

It is found in the cytoplasm. Functionally, inhibits RpoS proteolysis by regulating RssB activity, thereby increasing the stability of the sigma stress factor RpoS especially during phosphate starvation, but also in stationary phase and during nitrogen starvation. Its effect on RpoS stability is due to its interaction with RssB, which probably blocks the interaction of RssB with RpoS, and the consequent delivery of the RssB-RpoS complex to the ClpXP protein degradation pathway. The sequence is that of Anti-adapter protein IraP from Shigella sonnei (strain Ss046).